Reading from the N-terminus, the 338-residue chain is CDP-paratose 2-epimerase (338 aa).

Threonine 124 serves as a coordination point for substrate. Tyrosine 164 acts as the Proton acceptor in catalysis.

The protein belongs to the NAD(P)-dependent epimerase/dehydratase family. Homotetramer. NAD(+) serves as cofactor.

The catalysed reaction is CDP-alpha-D-paratose = CDP-3,6-dideoxy-alpha-D-mannose. It participates in nucleotide-sugar biosynthesis; CDP-3,6-dideoxy-D-mannose biosynthesis; CDP-3,6-dideoxy-D-mannose from CTP and alpha-D-glucose 1-phosphate: step 5/5. Functionally, catalyzes the isomeration of CDP-paratose to CDP-tyvelose. This chain is CDP-paratose 2-epimerase (rfbE), found in Salmonella typhi.